The following is a 255-amino-acid chain: DFWVGPFYVGFFGVTAAFFIMLGTALIIWGAALGPTWNIWQISIAPPDLSYGLGLAPLAKGGLWQIITVCAIGAFGSWALREVEISRKLGIGLHVPAAFSVAIFAYVTLEVIRPLLMGAWGNGFPYGIMSHLDWVSNTGYAYLNFEYNPMHMVAVTLFFTTTLALALHGSLVLAAINPPAGETVKFAEHEDTFFRDFIGYSIGTLGIHRLGLFLALGAGFASATCILLSGPFWTQGWPSWWGWWLHLPIWQFGGH.

A run of 3 helical transmembrane segments spans residues 11–33, 61–89, and 94–116; these read FFGV…GAAL, GGLW…SRKL, and HVPA…RPLL. (7R,8Z)-bacteriochlorophyll b is bound by residues histidine 131 and histidine 151. A helical membrane pass occupies residues 149–176; sequence PMHMVAVTLFFTTTLALALHGSLVLAAI. Histidine 168 provides a ligand contact to Fe cation. Phenylalanine 194 is an a ubiquinone binding site. Residues 203–228 traverse the membrane as a helical segment; the sequence is GTLGIHRLGLFLALGAGFASATCILL. A Fe cation-binding site is contributed by histidine 208.

It belongs to the reaction center PufL/M/PsbA/D family. As to quaternary structure, reaction center is composed of four bacteriochlorophylls, two bacteriopheophytins, two ubiquinones, one iron, and two highly hydrophobic polypeptide chains (designated L and M).

The protein localises to the cell inner membrane. The reaction center is a membrane-bound complex that mediates the initial photochemical event in the electron transfer process of photosynthesis. The chain is Reaction center protein L chain (pufL) from Acidiphilium multivorum.